Reading from the N-terminus, the 832-residue chain is Conserved oligomeric Golgi complex subunit 5 (832 aa).

Pro residues-rich tracts occupy residues 1 to 11 (MALPPSSPSPS) and 23 to 38 (NPPPSSLSSGAPPPQT). A disordered region spans residues 1–49 (MALPPSSPSPSSPSLQRLSTFKNPPPSSLSSGAPPPQTPSSSSSSPLDS). Positions 39–49 (PSSSSSSPLDS) are enriched in low complexity.

The protein belongs to the COG5 family. In terms of assembly, homodimer. Component of the conserved oligomeric Golgi complex which is composed of eight different subunits and is required for normal Golgi morphology and localization. Interacts with COG3, COG6, COG7 and COG8.

It localises to the golgi apparatus membrane. Its function is as follows. Required for normal Golgi function. The polypeptide is Conserved oligomeric Golgi complex subunit 5 (Arabidopsis thaliana (Mouse-ear cress)).